The chain runs to 228 residues: Ribosomal RNA small subunit methyltransferase G (228 aa).

S-adenosyl-L-methionine contacts are provided by residues glycine 89, leucine 94, 140 to 141, and arginine 159; that span reads VE.

It belongs to the methyltransferase superfamily. RNA methyltransferase RsmG family.

The protein localises to the cytoplasm. It catalyses the reaction guanosine(527) in 16S rRNA + S-adenosyl-L-methionine = N(7)-methylguanosine(527) in 16S rRNA + S-adenosyl-L-homocysteine. Its function is as follows. Specifically methylates the N7 position of guanine in position 527 of 16S rRNA. The sequence is that of Ribosomal RNA small subunit methyltransferase G from Burkholderia cenocepacia (strain HI2424).